The following is a 365-amino-acid chain: Chorismate synthase (365 aa).

NADP(+) contacts are provided by R48 and R54. FMN contacts are provided by residues R129 to S131, N241 to A242, G285, K300 to S304, and R326.

The protein belongs to the chorismate synthase family. Homotetramer. It depends on FMNH2 as a cofactor.

The catalysed reaction is 5-O-(1-carboxyvinyl)-3-phosphoshikimate = chorismate + phosphate. The protein operates within metabolic intermediate biosynthesis; chorismate biosynthesis; chorismate from D-erythrose 4-phosphate and phosphoenolpyruvate: step 7/7. Functionally, catalyzes the anti-1,4-elimination of the C-3 phosphate and the C-6 proR hydrogen from 5-enolpyruvylshikimate-3-phosphate (EPSP) to yield chorismate, which is the branch point compound that serves as the starting substrate for the three terminal pathways of aromatic amino acid biosynthesis. This reaction introduces a second double bond into the aromatic ring system. The protein is Chorismate synthase of Parvibaculum lavamentivorans (strain DS-1 / DSM 13023 / NCIMB 13966).